The primary structure comprises 980 residues: Envelope glycoprotein B (980 aa).

The segment covering 1-14 has biased composition (polar residues); the sequence is MSSGCRSVGGSTWG. Disordered stretches follow at residues 1-20 and 88-118; these read MSSG…RGDG and TTPS…TETP. The N-terminal stretch at 1-86 is a signal peptide; it reads MSSGCRSVGG…LFGSCVVRAV (86 aa). Over 87–849 the chain is Virion surface; that stretch reads PTTPSPPTST…SGIASFLNNP (763 aa). A compositionally biased stretch (low complexity) spans 96–118; sequence TPTSMSTHSHGTVDPTLLPTETP. Intrachain disulfides connect C140–C647, C157–C603, C231–C296, C389–C437, and C668–C708. N165 is a glycosylation site (N-linked (GlcNAc...) asparagine; by host). Residues 197 to 203 are involved in fusion and/or binding to host membrane; it reads VWKGYSH. A glycan (N-linked (GlcNAc...) asparagine; by host) is linked at N275. Residues 282-290 form an involved in fusion and/or binding to host membrane region; it reads GWMPWRHYT. Residues N380, N423, N497, N514, N515, and N560 are each glycosylated (N-linked (GlcNAc...) asparagine; by host). The segment covering 505 to 516 has biased composition (low complexity); sequence LLNPNANNNNNT. The interval 505 to 535 is disordered; that stretch reads LLNPNANNNNNTTRRRRSLLSVPEPQPTQDG. 2 N-linked (GlcNAc...) asparagine; by host glycosylation sites follow: N727 and N749. Hydrophobic membrane proximal region regions lie at residues 794–847 and 823–843; these read IDSV…SFLN and AVGT…SGIA. Residues 850–870 traverse the membrane as a helical segment; that stretch reads FGGLAIGLLVIAGLVAAFFAY. Residues 871–980 are Intravirion-facing; it reads RYVMQIRSNP…NDTMENEKMV (110 aa). The Golgi targeting motif lies at 925 to 928; that stretch reads YMSM. Residues 965 to 968 carry the Internalization motif motif; that stretch reads YTRL.

It belongs to the herpesviridae glycoprotein B family. Homotrimer; disulfide-linked. Binds to heparan sulfate proteoglycans. Interacts with gH/gL heterodimer. Post-translationally, a proteolytic cleavage by host furin generates two subunits that remain linked by disulfide bonds.

It is found in the virion membrane. It localises to the host cell membrane. Its subcellular location is the host endosome membrane. The protein resides in the host Golgi apparatus membrane. Its function is as follows. Envelope glycoprotein that forms spikes at the surface of virion envelope. Essential for the initial attachment to heparan sulfate moieties of the host cell surface proteoglycans. Involved in fusion of viral and cellular membranes leading to virus entry into the host cell. Following initial binding to its host receptors, membrane fusion is mediated by the fusion machinery composed at least of gB and the heterodimer gH/gL. May be involved in the fusion between the virion envelope and the outer nuclear membrane during virion egress. The protein is Envelope glycoprotein B of Equus caballus (Horse).